Reading from the N-terminus, the 135-residue chain is ATP synthase epsilon chain (135 aa).

This sequence belongs to the ATPase epsilon chain family. As to quaternary structure, F-type ATPases have 2 components, CF(1) - the catalytic core - and CF(0) - the membrane proton channel. CF(1) has five subunits: alpha(3), beta(3), gamma(1), delta(1), epsilon(1). CF(0) has three main subunits: a, b and c.

It is found in the cell inner membrane. In terms of biological role, produces ATP from ADP in the presence of a proton gradient across the membrane. The chain is ATP synthase epsilon chain from Chelativorans sp. (strain BNC1).